The chain runs to 881 residues: Lon protease (881 aa).

The span at 1-24 shows a compositional bias: basic and acidic residues; the sequence is MAKNTDIEHDAHEPAGHGDVRESA. The tract at residues 1 to 77 is disordered; that stretch reads MAKNTDIEHD…RAGEAEKGVP (77 aa). The segment covering 49–59 has biased composition (polar residues); sequence QTDTESAQGAA. Basic and acidic residues predominate over residues 65–77; it reads EVQRAGEAEKGVP. Residues 94-287 enclose the Lon N-terminal domain; that stretch reads VHLIPLTGRP…EVFVYIKKEK (194 aa). 440–447 provides a ligand contact to ATP; the sequence is GPPGVGKT. The Lon proteolytic domain maps to 679 to 861; it reads ANKVGTAVGL…EEVLSLAFPK (183 aa). Residues Ser767 and Lys810 contribute to the active site.

Belongs to the peptidase S16 family. As to quaternary structure, homohexamer. Organized in a ring with a central cavity.

Its subcellular location is the cytoplasm. It catalyses the reaction Hydrolysis of proteins in presence of ATP.. ATP-dependent serine protease that mediates the selective degradation of mutant and abnormal proteins as well as certain short-lived regulatory proteins. Required for cellular homeostasis and for survival from DNA damage and developmental changes induced by stress. Degrades polypeptides processively to yield small peptide fragments that are 5 to 10 amino acids long. Binds to DNA in a double-stranded, site-specific manner. This chain is Lon protease, found in Treponema pallidum (strain Nichols).